Here is a 202-residue protein sequence, read N- to C-terminus: 3-isopropylmalate dehydratase small subunit (202 aa).

Belongs to the LeuD family. LeuD type 1 subfamily. Heterodimer of LeuC and LeuD.

The catalysed reaction is (2R,3S)-3-isopropylmalate = (2S)-2-isopropylmalate. It functions in the pathway amino-acid biosynthesis; L-leucine biosynthesis; L-leucine from 3-methyl-2-oxobutanoate: step 2/4. Functionally, catalyzes the isomerization between 2-isopropylmalate and 3-isopropylmalate, via the formation of 2-isopropylmaleate. The polypeptide is 3-isopropylmalate dehydratase small subunit (Rhizobium johnstonii (strain DSM 114642 / LMG 32736 / 3841) (Rhizobium leguminosarum bv. viciae)).